The primary structure comprises 508 residues: Photosystem II CP47 reaction center protein (508 aa).

6 helical membrane passes run 21-36 (SVHI…WAGS), 101-115 (IVFS…IWHW), 140-156 (GIHL…FGAF), 203-218 (IAAG…FHLS), 237-252 (VLSS…AFVV), and 457-472 (SFAL…HGAR).

This sequence belongs to the PsbB/PsbC family. PsbB subfamily. PSII is composed of 1 copy each of membrane proteins PsbA, PsbB, PsbC, PsbD, PsbE, PsbF, PsbH, PsbI, PsbJ, PsbK, PsbL, PsbM, PsbT, PsbX, PsbY, PsbZ, Psb30/Ycf12, at least 3 peripheral proteins of the oxygen-evolving complex and a large number of cofactors. It forms dimeric complexes. Binds multiple chlorophylls. PSII binds additional chlorophylls, carotenoids and specific lipids. is required as a cofactor.

Its subcellular location is the plastid. The protein localises to the chloroplast thylakoid membrane. Functionally, one of the components of the core complex of photosystem II (PSII). It binds chlorophyll and helps catalyze the primary light-induced photochemical processes of PSII. PSII is a light-driven water:plastoquinone oxidoreductase, using light energy to abstract electrons from H(2)O, generating O(2) and a proton gradient subsequently used for ATP formation. The polypeptide is Photosystem II CP47 reaction center protein (Lemna minor (Common duckweed)).